The chain runs to 575 residues: Acetolactate synthase large subunit (575 aa).

Glutamate 57 contributes to the thiamine diphosphate binding site. FAD contacts are provided by residues arginine 159, 265–286, and 308–327; these read HGSYAANMALVEADYIINLGSR and DIDAAELGKIVKTDIPILSD. A thiamine pyrophosphate binding region spans residues 395–475; that stretch reads QHQMWVAQYY…IKVVLINNHS (81 aa). Mg(2+) is bound by residues aspartate 446 and asparagine 473.

This sequence belongs to the TPP enzyme family. Dimer of large and small chains. The cofactor is Mg(2+). Thiamine diphosphate is required as a cofactor.

It carries out the reaction 2 pyruvate + H(+) = (2S)-2-acetolactate + CO2. It participates in amino-acid biosynthesis; L-isoleucine biosynthesis; L-isoleucine from 2-oxobutanoate: step 1/4. It functions in the pathway amino-acid biosynthesis; L-valine biosynthesis; L-valine from pyruvate: step 1/4. This chain is Acetolactate synthase large subunit (ilvB), found in Lactococcus lactis subsp. lactis (strain IL1403) (Streptococcus lactis).